The sequence spans 325 residues: Probable pectate lyase B (325 aa).

The N-terminal stretch at 1 to 15 is a signal peptide; that stretch reads MRLPTLFMLAAIATA. Ca(2+) contacts are provided by D132, D161, and D165. Residue R218 is part of the active site.

Belongs to the polysaccharide lyase 1 family. Requires Ca(2+) as cofactor.

Its subcellular location is the secreted. The catalysed reaction is Eliminative cleavage of (1-&gt;4)-alpha-D-galacturonan to give oligosaccharides with 4-deoxy-alpha-D-galact-4-enuronosyl groups at their non-reducing ends.. Its function is as follows. Pectinolytic enzyme consist of four classes of enzymes: pectin lyase, polygalacturonase, pectin methylesterase and rhamnogalacturonase. Among pectinolytic enzymes, pectin lyase is the most important in depolymerization of pectin, since it cleaves internal glycosidic bonds of highly methylated pectins. Favors pectate, the anion, over pectin, the methyl ester. In Aspergillus terreus (strain NIH 2624 / FGSC A1156), this protein is Probable pectate lyase B (plyB).